The following is a 369-amino-acid chain: Maltose/maltodextrin import ATP-binding protein MalK (369 aa).

Positions 4 to 234 (VTLSSVYKAF…PANRFVAGFI (231 aa)) constitute an ABC transporter domain. An ATP-binding site is contributed by 36–43 (GPSGCGKS).

Belongs to the ABC transporter superfamily. Maltooligosaccharide importer (TC 3.A.1.1.1) family. In terms of assembly, the complex is composed of two ATP-binding proteins (MalK), two transmembrane proteins (MalG and MalK) and a solute-binding protein (MalE).

The protein resides in the cell inner membrane. The enzyme catalyses D-maltose(out) + ATP + H2O = D-maltose(in) + ADP + phosphate + H(+). Part of the ABC transporter complex MalEFGK involved in maltose/maltodextrin import. Responsible for energy coupling to the transport system. This chain is Maltose/maltodextrin import ATP-binding protein MalK, found in Yersinia pestis bv. Antiqua (strain Antiqua).